A 120-amino-acid chain; its full sequence is Chaperonin GroEL (120 aa).

Residue 23 to 27 participates in ATP binding; sequence DGTTT.

Belongs to the chaperonin (HSP60) family. As to quaternary structure, forms a cylinder of 14 subunits composed of two heptameric rings stacked back-to-back. Interacts with the co-chaperonin GroES.

It is found in the cytoplasm. It carries out the reaction ATP + H2O + a folded polypeptide = ADP + phosphate + an unfolded polypeptide.. In terms of biological role, together with its co-chaperonin GroES, plays an essential role in assisting protein folding. The GroEL-GroES system forms a nano-cage that allows encapsulation of the non-native substrate proteins and provides a physical environment optimized to promote and accelerate protein folding. In Mycobacterium malmoense, this protein is Chaperonin GroEL.